The chain runs to 148 residues: Small ribosomal subunit protein bS6 (148 aa).

Residues 96–148 form a disordered region; that stretch reads HEEGQSAMLTRRDDRRERDGDDRPRRREGGFDRGDRGDRGPRRPRDNEAGEGA.

This sequence belongs to the bacterial ribosomal protein bS6 family.

Functionally, binds together with bS18 to 16S ribosomal RNA. The protein is Small ribosomal subunit protein bS6 of Brucella abortus biovar 1 (strain 9-941).